Consider the following 413-residue polypeptide: Intracellular hyaluronan-binding protein 4 (413 aa).

A phosphoserine mark is found at Ser7 and Ser36. Residues 40 to 64 adopt a coiled-coil conformation; it reads DILREAERRRQQQLQRKRRDEAAAA. A disordered region spans residues 42-206; the sequence is LREAERRRQQ…RGGPGNRVFD (165 aa). The span at 62 to 82 shows a compositional bias: low complexity; sequence AAAAGAGPRGGRSPAGASGHR. Arg70 is subject to Omega-N-methylarginine. A Phosphoserine modification is found at Ser74. A compositionally biased stretch (basic and acidic residues) spans 87–97; the sequence is GRRESQKERKS. Ser108 carries the post-translational modification Phosphoserine. The segment covering 139 to 182 has biased composition (basic and acidic residues); that stretch reads MLERAERRSYREYRPYETERQADFTAEKFPDEKPGDRFDRDRPL. A compositionally biased stretch (gly residues) spans 184 to 201; that stretch reads GRGGPRGGMRGRGRGGPG. Glycyl lysine isopeptide (Lys-Gly) (interchain with G-Cter in SUMO1); alternate cross-links involve residues Lys213 and Lys276. Residues Lys213 and Lys276 each participate in a glycyl lysine isopeptide (Lys-Gly) (interchain with G-Cter in SUMO2); alternate cross-link. The disordered stretch occupies residues 227–320; it reads VRTEDNMGGC…IRKPESTVPS (94 aa). The segment covering 294–315 has biased composition (basic and acidic residues); that stretch reads DEWKNLQEQTRPKPEFNIRKPE. Lys336 participates in a covalent cross-link: Glycyl lysine isopeptide (Lys-Gly) (interchain with G-Cter in SUMO1); alternate. Lys336 participates in a covalent cross-link: Glycyl lysine isopeptide (Lys-Gly) (interchain with G-Cter in SUMO2); alternate. Thr354 and Thr375 each carry phosphothreonine; by PKC. The disordered stretch occupies residues 360-413; sequence NFGNLPRPGRGARGGTRGGRGRIRRAENYGPRAEVVMQDVAPNPDDPEDFPALS. The span at 404–413 shows a compositional bias: acidic residues; sequence DDPEDFPALS.

It belongs to the SERBP1-HABP4 family. As to quaternary structure, associates with ribosomes; promoting ribosome stabilization. Interacts with EEF2/eEF2; promoting ribosome stabilization. Interacts with FMR1. Interacts with FXR1 and FXR2. Interacts with CHD3 (via C-terminus). Interacts (via C-terminus) with RACK1. Interacts with p53/TP53. Interacts (via N-terminus) with SRSF9; this interaction is direct. Interacts with SYNCRIP; this interaction is direct. Interacts with MEF2C (via N-terminus); this interaction decreases DNA-binding activity of MEF2C in myocardial cells in response to mechanical stress. Interacts with PRMT1 (via N-terminus). Interacts with SPIN1. Post-translationally, methylated. Methylation is decreased by phorbol 12-myristate 13-acetate (PMA)-activated PKC, in vitro. Phosphorylated by phorbol 12-myristate 13-acetate (PMA)-activated PKC isoforms at Thr-354 and Thr-375. In terms of tissue distribution, highly expressed in brain, heart, and kidney, and moderately expressed in skeletal muscle. Also expressed in a variety of tumor cell lines and in activated but not resting leukocytes.

It is found in the nucleus. The protein resides in the cytoplasm. The protein localises to the stress granule. It localises to the sarcoplasm. Its subcellular location is the nuclear body. It is found in the nucleolus. The protein resides in the nucleus speckle. The protein localises to the cajal body. It localises to the gem. In terms of biological role, ribosome-binding protein that promotes ribosome hibernation, a process during which ribosomes are stabilized in an inactive state and preserved from proteasomal degradation. Acts via its association with EEF2/eEF2 factor at the A-site of the ribosome, promoting ribosome stabilization in an inactive state compatible with storage. Plays a key role in ribosome hibernation in the mature oocyte by promoting ribosome stabilization. Ribosomes, which are produced in large quantities during oogenesis, are stored and translationally repressed in the oocyte and early embryo. Also binds RNA, regulating transcription and pre-mRNA splicing. Binds (via C-terminus) to poly(U) RNA. Seems to play a role in PML-nuclear bodies formation. Negatively regulates DNA-binding activity of the transcription factor MEF2C in myocardial cells in response to mechanical stress. In Homo sapiens (Human), this protein is Intracellular hyaluronan-binding protein 4.